A 918-amino-acid polypeptide reads, in one-letter code: Isoleucine--tRNA ligase (918 aa).

The short motif at 57 to 67 (PYANGDIHIGH) is the 'HIGH' region element. Glutamate 568 lines the L-isoleucyl-5'-AMP pocket. The 'KMSKS' region motif lies at 609-613 (KMSKS). Lysine 612 serves as a coordination point for ATP. Zn(2+) is bound by residues cysteine 894, cysteine 897, cysteine 909, and cysteine 912.

The protein belongs to the class-I aminoacyl-tRNA synthetase family. IleS type 1 subfamily. Monomer. Requires Zn(2+) as cofactor.

It localises to the cytoplasm. It carries out the reaction tRNA(Ile) + L-isoleucine + ATP = L-isoleucyl-tRNA(Ile) + AMP + diphosphate. In terms of biological role, catalyzes the attachment of isoleucine to tRNA(Ile). As IleRS can inadvertently accommodate and process structurally similar amino acids such as valine, to avoid such errors it has two additional distinct tRNA(Ile)-dependent editing activities. One activity is designated as 'pretransfer' editing and involves the hydrolysis of activated Val-AMP. The other activity is designated 'posttransfer' editing and involves deacylation of mischarged Val-tRNA(Ile). The sequence is that of Isoleucine--tRNA ligase from Sulfurovum sp. (strain NBC37-1).